We begin with the raw amino-acid sequence, 86 residues long: Superoxide dismutase [Cu-Zn] (86 aa).

A disordered region spans residues 1-26 (AKEKGGKLTAGLAAGGHWNPNKAPHH). Positions 7–16 (KLTAGLAAGG) are enriched in low complexity. Residue His-17 participates in Cu cation binding. Zn(2+) contacts are provided by His-17, His-26, His-35, and Asp-38. Residue His-73 coordinates Cu cation.

The protein belongs to the Cu-Zn superoxide dismutase family. Homodimer. It depends on Cu cation as a cofactor. Zn(2+) is required as a cofactor.

It is found in the periplasm. It carries out the reaction 2 superoxide + 2 H(+) = H2O2 + O2. Functionally, destroys radicals which are normally produced within the cells and which are toxic to biological systems. In Mannheimia haemolytica (Pasteurella haemolytica), this protein is Superoxide dismutase [Cu-Zn] (sodC).